The chain runs to 475 residues: Sulfate adenylyltransferase subunit 1 (475 aa).

The tr-type G domain occupies 25–239 (KSLLRFLTCG…EVLETVEIQR (215 aa)). A G1 region spans residues 34–41 (GSVDDGKS). GTP is bound at residue 34–41 (GSVDDGKS). The interval 92–96 (GITID) is G2. Positions 113–116 (DTPG) are G3. Residues 113–117 (DTPGH) and 168–171 (NKMD) each bind GTP. The G4 stretch occupies residues 168-171 (NKMD). The interval 206–208 (SAL) is G5.

It belongs to the TRAFAC class translation factor GTPase superfamily. Classic translation factor GTPase family. CysN/NodQ subfamily. As to quaternary structure, heterodimer composed of CysD, the smaller subunit, and CysN.

The enzyme catalyses sulfate + ATP + H(+) = adenosine 5'-phosphosulfate + diphosphate. It participates in sulfur metabolism; hydrogen sulfide biosynthesis; sulfite from sulfate: step 1/3. Its function is as follows. With CysD forms the ATP sulfurylase (ATPS) that catalyzes the adenylation of sulfate producing adenosine 5'-phosphosulfate (APS) and diphosphate, the first enzymatic step in sulfur assimilation pathway. APS synthesis involves the formation of a high-energy phosphoric-sulfuric acid anhydride bond driven by GTP hydrolysis by CysN coupled to ATP hydrolysis by CysD. This is Sulfate adenylyltransferase subunit 1 from Shigella sonnei (strain Ss046).